The following is a 277-amino-acid chain: Phosphatidylglycerol--prolipoprotein diacylglyceryl transferase (277 aa).

A run of 4 helical transmembrane segments spans residues 15 to 35 (IHVRWYGIIIACGILLATFMS), 50 to 70 (IDLLLWGVPIGFIGARIYYVI), 89 to 109 (GGIAIYGGLIAGAIVLLVFCY), and 112 to 132 (FLPPFLVLDIVAPGVMAAQVL). Residue R134 coordinates a 1,2-diacyl-sn-glycero-3-phospho-(1'-sn-glycerol). The next 3 membrane-spanning stretches (helical) occupy residues 174-194 (KPTFLYESFFNLIGLIIILSL), 204-224 (GEVFMLYLAWYSVVRFFVEGM), and 234-254 (VIRVSQALSLLLLIAVVILFV).

This sequence belongs to the Lgt family.

The protein localises to the cell membrane. It carries out the reaction L-cysteinyl-[prolipoprotein] + a 1,2-diacyl-sn-glycero-3-phospho-(1'-sn-glycerol) = an S-1,2-diacyl-sn-glyceryl-L-cysteinyl-[prolipoprotein] + sn-glycerol 1-phosphate + H(+). It functions in the pathway protein modification; lipoprotein biosynthesis (diacylglyceryl transfer). In terms of biological role, catalyzes the transfer of the diacylglyceryl group from phosphatidylglycerol to the sulfhydryl group of the N-terminal cysteine of a prolipoprotein, the first step in the formation of mature lipoproteins. The chain is Phosphatidylglycerol--prolipoprotein diacylglyceryl transferase from Lactobacillus delbrueckii subsp. bulgaricus (strain ATCC 11842 / DSM 20081 / BCRC 10696 / JCM 1002 / NBRC 13953 / NCIMB 11778 / NCTC 12712 / WDCM 00102 / Lb 14).